The sequence spans 386 residues: Alanine racemase (386 aa).

The active-site Proton acceptor; specific for D-alanine is K48. K48 carries the post-translational modification N6-(pyridoxal phosphate)lysine. R147 lines the substrate pocket. Residue Y279 is the Proton acceptor; specific for L-alanine of the active site. Residue M327 coordinates substrate.

This sequence belongs to the alanine racemase family. The cofactor is pyridoxal 5'-phosphate.

It catalyses the reaction L-alanine = D-alanine. The protein operates within amino-acid biosynthesis; D-alanine biosynthesis; D-alanine from L-alanine: step 1/1. Functionally, catalyzes the interconversion of L-alanine and D-alanine. May also act on other amino acids. The sequence is that of Alanine racemase (alr) from Prochlorococcus marinus (strain SARG / CCMP1375 / SS120).